Consider the following 264-residue polypeptide: Probable amino-acid-binding protein YxeM (264 aa).

An N-terminal signal peptide occupies residues 1–20 (MKMKKWTVLVVAALLAVLSA). C21 carries the N-palmitoyl cysteine lipid modification. C21 carries the S-diacylglycerol cysteine lipid modification.

This sequence belongs to the bacterial solute-binding protein 3 family. As to quaternary structure, the complex is composed of two ATP-binding proteins (YxeO), two transmembrane proteins (YxeN) and a solute-binding protein (YxeM).

The protein localises to the cell membrane. Its subcellular location is the membrane raft. In terms of biological role, probably part of the ABC transporter complex YxeMNO that could be involved in amino-acid import. May transport S-methylcysteine. In Bacillus subtilis (strain 168), this protein is Probable amino-acid-binding protein YxeM (yxeM).